We begin with the raw amino-acid sequence, 244 residues long: Triosephosphate isomerase (244 aa).

Residue 9–11 participates in substrate binding; that stretch reads NWK. The active-site Electrophile is the His93. Glu160 serves as the catalytic Proton acceptor. Substrate is bound by residues Gly166 and Ser206.

The protein belongs to the triosephosphate isomerase family. In terms of assembly, homodimer.

Its subcellular location is the cytoplasm. The enzyme catalyses D-glyceraldehyde 3-phosphate = dihydroxyacetone phosphate. The protein operates within carbohydrate biosynthesis; gluconeogenesis. It functions in the pathway carbohydrate degradation; glycolysis; D-glyceraldehyde 3-phosphate from glycerone phosphate: step 1/1. Its function is as follows. Involved in the gluconeogenesis. Catalyzes stereospecifically the conversion of dihydroxyacetone phosphate (DHAP) to D-glyceraldehyde-3-phosphate (G3P). This is Triosephosphate isomerase from Mycoplasma pneumoniae (strain ATCC 29342 / M129 / Subtype 1) (Mycoplasmoides pneumoniae).